Here is a 234-residue protein sequence, read N- to C-terminus: Phosphoribosylaminoimidazole-succinocarboxamide synthase (234 aa).

The protein belongs to the SAICAR synthetase family.

The catalysed reaction is 5-amino-1-(5-phospho-D-ribosyl)imidazole-4-carboxylate + L-aspartate + ATP = (2S)-2-[5-amino-1-(5-phospho-beta-D-ribosyl)imidazole-4-carboxamido]succinate + ADP + phosphate + 2 H(+). Its pathway is purine metabolism; IMP biosynthesis via de novo pathway; 5-amino-1-(5-phospho-D-ribosyl)imidazole-4-carboxamide from 5-amino-1-(5-phospho-D-ribosyl)imidazole-4-carboxylate: step 1/2. The protein is Phosphoribosylaminoimidazole-succinocarboxamide synthase of Staphylococcus aureus (strain MRSA252).